We begin with the raw amino-acid sequence, 199 residues long: Elongation factor Ts (199 aa).

Residues 82–85 form an involved in Mg(2+) ion dislocation from EF-Tu region; sequence TDFV.

The protein belongs to the EF-Ts family.

It is found in the cytoplasm. Its function is as follows. Associates with the EF-Tu.GDP complex and induces the exchange of GDP to GTP. It remains bound to the aminoacyl-tRNA.EF-Tu.GTP complex up to the GTP hydrolysis stage on the ribosome. The chain is Elongation factor Ts from Leptospira interrogans serogroup Icterohaemorrhagiae serovar copenhageni (strain Fiocruz L1-130).